The chain runs to 512 residues: Activin receptor type-2B (512 aa).

The N-terminal stretch at 1–24 is a signal peptide; sequence MSASWLTLAVLCATLGAGPGHGEA. Topologically, residues 25-137 are extracellular; the sequence is ETRECIYYNA…PPPPTPSLLN (113 aa). Intrachain disulfides connect Cys29-Cys59, Cys49-Cys77, Cys84-Cys103, Cys90-Cys102, and Cys104-Cys109. N-linked (GlcNAc...) asparagine glycosylation is found at Asn42 and Asn65. A helical transmembrane segment spans residues 138-158; the sequence is ILVYSLLPIAVLSVAILLAFW. The Cytoplasmic portion of the chain corresponds to 159 to 512; the sequence is MYRHRKPPYG…VDLPPKESSI (354 aa). The region spanning 190-478 is the Protein kinase domain; that stretch reads LQLLEIKARG…LSAGCVEERI (289 aa). ATP is bound by residues 196-204 and Lys217; that span reads KARGRFGCV. Residue Asp321 is the Proton acceptor of the active site.

The protein belongs to the protein kinase superfamily. TKL Ser/Thr protein kinase family. TGFB receptor subfamily. The cofactor is Mg(2+). Mn(2+) serves as cofactor. Not expressed in hen anterior pituitary during the ovulatory cycle but expressed in the ovarian follicle.

Its subcellular location is the membrane. The catalysed reaction is L-threonyl-[receptor-protein] + ATP = O-phospho-L-threonyl-[receptor-protein] + ADP + H(+). The enzyme catalyses L-seryl-[receptor-protein] + ATP = O-phospho-L-seryl-[receptor-protein] + ADP + H(+). Functionally, on ligand binding, forms a receptor complex consisting of two type II and two type I transmembrane serine/threonine kinases. Type II receptors phosphorylate and activate type I receptors which autophosphorylate, then bind and activate SMAD transcriptional regulators. Receptor for activin A, activin B and inhibin A. May modulate neuropeptide expression in dorsal root ganglia (DRG) neurons and ovarian follicle development. The sequence is that of Activin receptor type-2B (ACVR2B) from Gallus gallus (Chicken).